Consider the following 159-residue polypeptide: Aspartate carbamoyltransferase regulatory chain (159 aa).

Residues C113, C118, C142, and C145 each coordinate Zn(2+).

This sequence belongs to the PyrI family. In terms of assembly, contains catalytic and regulatory chains. Zn(2+) is required as a cofactor.

In terms of biological role, involved in allosteric regulation of aspartate carbamoyltransferase. The chain is Aspartate carbamoyltransferase regulatory chain from Saccharolobus islandicus (strain Y.N.15.51 / Yellowstone #2) (Sulfolobus islandicus).